A 615-amino-acid chain; its full sequence is 1-deoxy-D-xylulose-5-phosphate synthase (615 aa).

Thiamine diphosphate is bound by residues His76 and 117-119 (GHS). Position 148 (Asp148) interacts with Mg(2+). Thiamine diphosphate is bound by residues 149–150 (GA), Asn177, Tyr284, and Glu365. Mg(2+) is bound at residue Asn177.

The protein belongs to the transketolase family. DXPS subfamily. In terms of assembly, homodimer. Mg(2+) is required as a cofactor. The cofactor is thiamine diphosphate.

It catalyses the reaction D-glyceraldehyde 3-phosphate + pyruvate + H(+) = 1-deoxy-D-xylulose 5-phosphate + CO2. It functions in the pathway metabolic intermediate biosynthesis; 1-deoxy-D-xylulose 5-phosphate biosynthesis; 1-deoxy-D-xylulose 5-phosphate from D-glyceraldehyde 3-phosphate and pyruvate: step 1/1. Its function is as follows. Catalyzes the acyloin condensation reaction between C atoms 2 and 3 of pyruvate and glyceraldehyde 3-phosphate to yield 1-deoxy-D-xylulose-5-phosphate (DXP). This is 1-deoxy-D-xylulose-5-phosphate synthase from Francisella tularensis subsp. holarctica (strain FTNF002-00 / FTA).